A 939-amino-acid polypeptide reads, in one-letter code: Dynamin-like GTPase MGM1, mitochondrial (939 aa).

Residues 1 to 27 (MSAQLRAAAAITPAARRVISGPAAVRR) constitute a mitochondrion transit peptide. Residues 85–103 (FIRVPALFGGMMLGAVGWV) traverse the membrane as a helical segment. Over residues 170–183 (AGEGSGSGEGGPNG) the composition is skewed to gly residues. The disordered stretch occupies residues 170-196 (AGEGSGSGEGGPNGGPEPPRQSRAGAA). The 274-residue stretch at 249 to 522 (TVTLPSIVVI…LEQQMSSKLN (274 aa)) folds into the Dynamin-type G domain. Residues 259-266 (GSQSSGKS) are G1 motif. GTP contacts are provided by Ser-262, Gly-264, Lys-265, Ser-266, Ser-267, and Gly-281. Ser-266 provides a ligand contact to Mg(2+). The tract at residues 285–287 (ITR) is G2 motif. Residues Thr-286 and Asp-359 each contribute to the Mg(2+) site. The interval 359–362 (DLPG) is G3 motif. Residues 427–430 (TKMD) form a G4 motif region. The GTP site is built by Lys-428, Asp-430, and Ser-457. The tract at residues 456–459 (ISKL) is G5 motif. Residues 549–703 (SAESYLAASL…TSDGIEISLK (155 aa)) are stalk region. The interval 710–809 (DIQPNEWAQG…LSLRIQAAKS (100 aa)) is paddle region. The tract at residues 810-877 (RQCKTLTNKY…GGGLEKFARE (68 aa)) is stalk region. The cysteines at positions 812 and 821 are disulfide-linked. Residues 815–909 (LTNKYYCPEV…KIEELHRISS (95 aa)) enclose the GED domain.

This sequence belongs to the TRAFAC class dynamin-like GTPase superfamily. Dynamin/Fzo/YdjA family. As to quaternary structure, oligomeric complex consisting of membrane-bound and soluble forms of MGM1. In terms of processing, cleavage of the transit peptide by mitochondrial processing protease (MPP) produces a long integral membrane form of MGM1 (L-MGM1). Further processing by the rhomboid protease PCP1 produces a short peripheral membrane form of MGM1 (S-MGM1). Both forms are required for full activity.

It localises to the mitochondrion inner membrane. It is found in the mitochondrion intermembrane space. It catalyses the reaction GTP + H2O = GDP + phosphate + H(+). Dynamin-related GTPase that is essential for normal mitochondrial morphology by mediating fusion of the mitochondrial inner membranes, regulating cristae morphology and maintaining respiratory chain function. Exists in two forms: the transmembrane, long form (Dynamin-like GTPase MGM1, long form; L-MGM1), which is tethered to the inner mitochondrial membrane, and the short soluble form (Dynamin-like GTPase MGM1, short form; S-MGM1), which results from proteolytic cleavage and localizes in the intermembrane space. Both forms (L-MGM1 and S-MGM1) cooperate to catalyze the fusion of the mitochondrial inner membrane. The equilibrium between L-MGM1 and S-MGM1 is essential: excess levels of S-MGM1, following loss of mitochondrial membrane potential, lead to an impaired equilibrium between L-MGM1 and S-MGM1, inhibiting mitochondrial fusion. Plays a role in the maintenance and remodeling of mitochondrial cristae, some invaginations of the mitochondrial inner membrane that provide an increase in the surface area. Probably acts by forming helical filaments at the inside of inner membrane tubes with the shape and dimensions of crista junctions. Its function is as follows. Constitutes the transmembrane long form (L-MGM1) that plays a central role in mitochondrial inner membrane fusion and cristae morphology. L-MGM1 and the soluble short form (S-MGM1) form higher-order helical assemblies that coordinate the fusion of mitochondrial inner membranes. Inner membrane-anchored L-MGM1 molecules initiate membrane remodeling by recruiting soluble S-MGM1 to rapidly polymerize into a flexible cylindrical scaffold encaging the mitochondrial inner membrane. Once at the membrane surface, the formation of S-MGM1 helices induce bilayer curvature. MGM1 dimerization through the paddle region, which inserts into cardiolipin-containing membrane, promotes GTP hydrolysis and the helical assembly of a flexible MGM1 lattice on the membrane, which drives membrane curvature and mitochondrial fusion. In terms of biological role, constitutes the soluble short form (S-MGM1) generated by cleavage by PCP1, which plays a central role in mitochondrial inner membrane fusion and cristae morphology. The transmembrane long form (L-MGM1) and the S-MGM1 form higher-order helical assemblies that coordinate the fusion of mitochondrial inner membranes. Inner membrane-anchored L-MGM1 molecules initiate membrane remodeling by recruiting soluble S-MGM1 to rapidly polymerize into a flexible cylindrical scaffold encaging the mitochondrial inner membrane. Once at the membrane surface, the formation of S-MGM1 helices induce bilayer curvature. MGM1 dimerization through the paddle region, which inserts into cardiolipin-containing membrane, promotes GTP hydrolysis and the helical assembly of a flexible MGM1 lattice on the membrane, which drives membrane curvature and mitochondrial fusion. Excess levels of S-MGM1 produced by cleavage by PCP1 following stress conditions that induce loss of mitochondrial membrane potential, lead to an impaired equilibrium between L-MGM1 and S-MGM1, thereby inhibiting mitochondrial fusion. This is Dynamin-like GTPase MGM1, mitochondrial from Chaetomium thermophilum (strain DSM 1495 / CBS 144.50 / IMI 039719) (Thermochaetoides thermophila).